The following is a 90-amino-acid chain: DNA-binding protein HU (90 aa).

Residue T4 is modified to Phosphothreonine. Residues 56-90 (AARKGRNPQTGEEMEIPASKVPAFKPGKALKDAVK) form a disordered region.

The protein belongs to the bacterial histone-like protein family. Homodimer.

Its function is as follows. Histone-like DNA-binding protein which is capable of wrapping DNA to stabilize it, and thus to prevent its denaturation under extreme environmental conditions. The sequence is that of DNA-binding protein HU (hup) from Geobacillus stearothermophilus (Bacillus stearothermophilus).